We begin with the raw amino-acid sequence, 433 residues long: 3-phosphoshikimate 1-carboxyvinyltransferase (433 aa).

3-phosphoshikimate is bound by residues Lys22, Ser23, and Arg27. Phosphoenolpyruvate is bound at residue Lys22. Positions 94 and 123 each coordinate phosphoenolpyruvate. Positions 168, 170, 319, and 346 each coordinate 3-phosphoshikimate. A phosphoenolpyruvate-binding site is contributed by Gln170. Catalysis depends on Asp319, which acts as the Proton acceptor. 2 residues coordinate phosphoenolpyruvate: Arg350 and Arg392.

Belongs to the EPSP synthase family. In terms of assembly, monomer.

Its subcellular location is the cytoplasm. The catalysed reaction is 3-phosphoshikimate + phosphoenolpyruvate = 5-O-(1-carboxyvinyl)-3-phosphoshikimate + phosphate. It functions in the pathway metabolic intermediate biosynthesis; chorismate biosynthesis; chorismate from D-erythrose 4-phosphate and phosphoenolpyruvate: step 6/7. In terms of biological role, catalyzes the transfer of the enolpyruvyl moiety of phosphoenolpyruvate (PEP) to the 5-hydroxyl of shikimate-3-phosphate (S3P) to produce enolpyruvyl shikimate-3-phosphate and inorganic phosphate. The sequence is that of 3-phosphoshikimate 1-carboxyvinyltransferase from Roseiflexus sp. (strain RS-1).